Consider the following 112-residue polypeptide: Putative pterin-4-alpha-carbinolamine dehydratase (112 aa).

Belongs to the pterin-4-alpha-carbinolamine dehydratase family.

It carries out the reaction (4aS,6R)-4a-hydroxy-L-erythro-5,6,7,8-tetrahydrobiopterin = (6R)-L-erythro-6,7-dihydrobiopterin + H2O. The protein is Putative pterin-4-alpha-carbinolamine dehydratase of Hahella chejuensis (strain KCTC 2396).